The primary structure comprises 387 residues: Bifunctional chorismate mutase/prephenate dehydratase (387 aa).

One can recognise a Chorismate mutase domain in the interval Met1 to Leu92. Substrate contacts are provided by Arg11, Arg28, Lys39, Asp48, Glu52, Ser84, and Gln88. The Prephenate dehydratase domain maps to Arg105–Arg285. Residues Thr299–Pro376 enclose the ACT domain.

The protein localises to the cytoplasm. The enzyme catalyses chorismate = prephenate. It catalyses the reaction prephenate + H(+) = 3-phenylpyruvate + CO2 + H2O. It participates in amino-acid biosynthesis; L-phenylalanine biosynthesis; phenylpyruvate from prephenate: step 1/1. It functions in the pathway metabolic intermediate biosynthesis; prephenate biosynthesis; prephenate from chorismate: step 1/1. Catalyzes the Claisen rearrangement of chorismate to prephenate and the decarboxylation/dehydration of prephenate to phenylpyruvate. In Enterobacter agglomerans (Erwinia herbicola), this protein is Bifunctional chorismate mutase/prephenate dehydratase (pheA).